The chain runs to 170 residues: MKTVIEFYLSGDRVYSEREKAINQLHINRGYGELKGKRLFLSLIEAAYLLEKGWIKVLDGERELSFYDVVSLGKKKDEDFDVKYLVYKDLRDRGYIVKSALKFGSHYRVYRKGAEHSDWLVWVVRESQKLSPNDITARARVAHGVRKTMVLAVVDEDGDVVYYKVEWTKF.

Active-site residues include Y110, H116, and K147.

Belongs to the tRNA-intron endonuclease family. Archaeal short subfamily. In terms of assembly, homotetramer; although the tetramer contains four active sites, only two participate in the cleavage. Therefore, it should be considered as a dimer of dimers.

It catalyses the reaction pretRNA = a 3'-half-tRNA molecule with a 5'-OH end + a 5'-half-tRNA molecule with a 2',3'-cyclic phosphate end + an intron with a 2',3'-cyclic phosphate and a 5'-hydroxyl terminus.. Endonuclease that removes tRNA introns. Cleaves pre-tRNA at the 5'- and 3'-splice sites to release the intron. The products are an intron and two tRNA half-molecules bearing 2',3' cyclic phosphate and 5'-OH termini. Recognizes a pseudosymmetric substrate in which 2 bulged loops of 3 bases are separated by a stem of 4 bp. The sequence is that of tRNA-splicing endonuclease from Pyrococcus furiosus (strain ATCC 43587 / DSM 3638 / JCM 8422 / Vc1).